Reading from the N-terminus, the 125-residue chain is RutC family protein aq_364 (125 aa).

It belongs to the RutC family.

The chain is RutC family protein aq_364 from Aquifex aeolicus (strain VF5).